Here is a 1893-residue protein sequence, read N- to C-terminus: Protein TIC 214 (1893 aa).

6 consecutive transmembrane segments (helical) span residues 18-38, 63-83, 87-107, 127-147, 175-195, and 224-244; these read IINS…FSIG, AITG…YAPL, LGRP…HFFW, LSIQ…HFIL, VGWL…LVWI, and IFSI…PSPI. 2 stretches are compositionally biased toward basic and acidic residues: residues 249–258 and 268–287; these read MKETSETEER and EIER…RSTE. Residues 249–317 are disordered; that stretch reads MKETSETEER…TEEIRVNGKE (69 aa). A compositionally biased stretch (acidic residues) spans 298–309; the sequence is EKEDPDKIDETE. Residues 1126–1146 form a helical membrane-spanning segment; sequence LHYFIKFFIERIYIDILLCLI.

It belongs to the TIC214 family. Part of the Tic complex.

It localises to the plastid. Its subcellular location is the chloroplast inner membrane. In terms of biological role, involved in protein precursor import into chloroplasts. May be part of an intermediate translocation complex acting as a protein-conducting channel at the inner envelope. This Vitis vinifera (Grape) protein is Protein TIC 214.